A 1116-amino-acid polypeptide reads, in one-letter code: DNA-directed RNA polymerase subunit beta (1116 aa).

The segment covering 1070–1100 (KIREEEKEREKEREAREMEDPEKIVSKIDAK) has biased composition (basic and acidic residues). The interval 1070–1116 (KIREEEKEREKEREAREMEDPEKIVSKIDAKQKKKYKKTKKQTEKKK) is disordered. Basic residues predominate over residues 1101–1116 (QKKKYKKTKKQTEKKK).

It belongs to the RNA polymerase beta chain family. In terms of assembly, in plastids the minimal PEP RNA polymerase catalytic core is composed of four subunits: alpha, beta, beta', and beta''. When a (nuclear-encoded) sigma factor is associated with the core the holoenzyme is formed, which can initiate transcription.

The protein localises to the plastid. It is found in the chloroplast. It catalyses the reaction RNA(n) + a ribonucleoside 5'-triphosphate = RNA(n+1) + diphosphate. Functionally, DNA-dependent RNA polymerase catalyzes the transcription of DNA into RNA using the four ribonucleoside triphosphates as substrates. The polypeptide is DNA-directed RNA polymerase subunit beta (Heterosigma akashiwo (Chromophytic alga)).